We begin with the raw amino-acid sequence, 315 residues long: Secreted mono- and diacylglycerol lipase LIP2 (315 aa).

A signal peptide spans 1-21 (MACFRVILYLSVIFFVQCVFA). Cys68 and Cys308 are joined by a disulfide. A glycan (N-linked (GlcNAc...) asparagine) is linked at Asn74. The active-site Nucleophile is the Ser182. Residue Asp240 is part of the active site. N-linked (GlcNAc...) asparagine glycosylation occurs at Asn265. The active site involves His292.

It belongs to the AB hydrolase superfamily. Lipase family. Class 3 subfamily.

The protein resides in the secreted. It carries out the reaction a monoacylglycerol + H2O = glycerol + a fatty acid + H(+). The enzyme catalyses a diacylglycerol + H2O = a monoacylglycerol + a fatty acid + H(+). Its function is as follows. Secreted lipase involved in Dandruff and seborrheic dermatitis (D/SD) probably via lipase-mediated breakdown of sebaceous lipids and release of irritating free fatty acids. Shows activity against monoglyceride and diglyceride substrates and generates free oleic acid from the substrates mono- and diolein. Able to cleave the oleic acid from both the 1 and the 2 position of the glycerol backbone as 1,2 isomers of diolein were converted into oleic acid and glycerol. Due to an absence of fatty acid synthase genes in Malassezia species, secretory lipases are essential for the yeast to generate free fatty acids from degradation of sebum and assimilate them as lipid sources for growth. Plays an essential role at the pathogen-host interface during disease progression. Also performs the reverse reaction to build diacylglycerols from monoacylglycerols. The chain is Secreted mono- and diacylglycerol lipase LIP2 from Malassezia restricta (Seborrheic dermatitis infection agent).